A 294-amino-acid polypeptide reads, in one-letter code: Ribosomal RNA small subunit methyltransferase H (294 aa).

S-adenosyl-L-methionine contacts are provided by residues 31-33 (GGY), D49, F76, D97, and Q104.

The protein belongs to the methyltransferase superfamily. RsmH family.

Its subcellular location is the cytoplasm. It carries out the reaction cytidine(1402) in 16S rRNA + S-adenosyl-L-methionine = N(4)-methylcytidine(1402) in 16S rRNA + S-adenosyl-L-homocysteine + H(+). Its function is as follows. Specifically methylates the N4 position of cytidine in position 1402 (C1402) of 16S rRNA. In Wolbachia pipientis subsp. Culex pipiens (strain wPip), this protein is Ribosomal RNA small subunit methyltransferase H.